A 593-amino-acid polypeptide reads, in one-letter code: ESX-1 secretion system protein EccCb1 (593 aa).

FtsK domains lie at 66–260 (RQEV…NETQ) and 350–546 (QVPL…EKND). Residues 85-92 (GAPQTGKS) and 377-384 (GAPKSGKT) each bind ATP.

Part of the ESX-1 / type VII secretion system (T7SS), which is composed of cytosolic and membrane components. The ESX-1 membrane complex is composed of EccB1, EccCa1, EccCb1, EccD1 and EccE1.

Its subcellular location is the cytoplasm. In terms of biological role, part of the ESX-1 / type VII specialized secretion system (T7SS), which exports several proteins including EsxA and EsxB. Plays a role in DNA conjugation, in both donor and recipient strains. The polypeptide is ESX-1 secretion system protein EccCb1 (eccCb1) (Mycolicibacterium smegmatis (strain MKD8) (Mycobacterium smegmatis)).